Consider the following 547-residue polypeptide: Chaperonin GroEL (547 aa).

ATP is bound by residues 30 to 33 (TLGP), lysine 51, 87 to 91 (DGTTT), glycine 415, 480 to 482 (NAA), and aspartate 496.

This sequence belongs to the chaperonin (HSP60) family. As to quaternary structure, forms a cylinder of 14 subunits composed of two heptameric rings stacked back-to-back. Interacts with the co-chaperonin GroES.

The protein localises to the cytoplasm. The enzyme catalyses ATP + H2O + a folded polypeptide = ADP + phosphate + an unfolded polypeptide.. Its function is as follows. Together with its co-chaperonin GroES, plays an essential role in assisting protein folding. The GroEL-GroES system forms a nano-cage that allows encapsulation of the non-native substrate proteins and provides a physical environment optimized to promote and accelerate protein folding. The chain is Chaperonin GroEL from Glaesserella parasuis serovar 5 (strain SH0165) (Haemophilus parasuis).